The sequence spans 357 residues: Probable butyrate kinase 1 (357 aa).

Belongs to the acetokinase family.

It is found in the cytoplasm. The enzyme catalyses butanoate + ATP = butanoyl phosphate + ADP. The protein is Probable butyrate kinase 1 of Caldanaerobacter subterraneus subsp. tengcongensis (strain DSM 15242 / JCM 11007 / NBRC 100824 / MB4) (Thermoanaerobacter tengcongensis).